Consider the following 152-residue polypeptide: Large ribosomal subunit protein bL9 (152 aa).

Belongs to the bacterial ribosomal protein bL9 family.

Binds to the 23S rRNA. The sequence is that of Large ribosomal subunit protein bL9 from Synechococcus sp. (strain WH7803).